The following is a 1183-amino-acid chain: Phospholipid-transporting ATPase FetA (1183 aa).

3 helical membrane-spanning segments follow: residues 96–116 (ISSL…SITG), 299–319 (VLVV…SIGH), and 348–368 (ALIF…SLYV). Aspartate 416 (4-aspartylphosphate intermediate) is an active-site residue. Residues aspartate 416, lysine 417, threonine 418, glutamate 519, phenylalanine 560, lysine 583, arginine 617, threonine 697, glycine 698, aspartate 699, arginine 812, and lysine 818 each contribute to the ATP site. Position 416 (aspartate 416) interacts with Mg(2+). Threonine 418 is a Mg(2+) binding site. Residue aspartate 838 coordinates Mg(2+). ATP contacts are provided by asparagine 841 and aspartate 842. Residue aspartate 842 participates in Mg(2+) binding. The next 6 helical transmembrane spans lie at 904–924 (FAFT…AQTV), 927–947 (IWFI…GLSL), 981–1001 (CLLH…GTVF), 1014–1034 (FQSF…MQIA), 1049–1069 (WGSL…GLCL), and 1090–1110 (IWLC…GYNF).

The protein belongs to the cation transport ATPase (P-type) (TC 3.A.3) family. Type IV subfamily. Mg(2+) is required as a cofactor. As to expression, highly expressed in testis.

It localises to the cytoplasmic vesicle. It is found in the secretory vesicle. The protein localises to the acrosome membrane. It carries out the reaction ATP + H2O + phospholipidSide 1 = ADP + phosphate + phospholipidSide 2.. Functionally, P4-ATPase flippase which catalyzes the hydrolysis of ATP coupled to the transport of aminophospholipids from the outer to the inner leaflet of various membranes and ensures the maintenance of asymmetric distribution of phospholipids. Phospholipid translocation also seems to be implicated in vesicle formation and in uptake of lipid signaling molecules. May play a role in phospholid transport across membranes and in acrosome formation. The polypeptide is Phospholipid-transporting ATPase FetA (Atp8b5) (Mus musculus (Mouse)).